Reading from the N-terminus, the 1487-residue chain is Major viral transcription factor (1487 aa).

Disordered regions lie at residues 41 to 295 (AAPD…LPPG), 310 to 371 (LAKT…EEAP), 409 to 442 (REPL…SRDG), and 803 to 1007 (PPTR…HTPR). Pro residues predominate over residues 66-75 (VIPPPSPAPE). Low complexity-rich tracts occupy residues 165-193 (PSSA…SSSS) and 201-213 (DGAG…SSSS). Residues 214–224 (DDSDSDEGGEE) are compositionally biased toward acidic residues. Residues 235 to 272 (AAKTPSAAGSPGPSSGGDRPAAGAATPKSCRSGAASPG) are compositionally biased toward low complexity. Positions 273–285 (APAPAPASAPAPS) are enriched in pro residues. Low complexity-rich tracts occupy residues 807 to 829 (SQQP…AEGS), 849 to 860 (PSSHSQSPQHSQ), and 867 to 877 (ATTATCCRATQ). Polar residues predominate over residues 878 to 893 (TNARSRGQQHQPQKAR). Basic residues predominate over residues 920-929 (HGRPRGKSGK). Over residues 938–951 (AAQAGASASFSSSA) the composition is skewed to low complexity. The segment covering 988–1007 (GPDRRGGFRRVPRGDCHTPR) has biased composition (basic and acidic residues).

The protein belongs to the herpesviridae ICP4 family. In terms of processing, a long stretch of serine residues may be a major site of phosphorylation.

It localises to the host nucleus. Its function is as follows. This IE protein is a multifunctional protein capable of migrating to the nucleus, binding to DNA, trans-activating other viral genes, and autoregulating its own synthesis. This is Major viral transcription factor (IE) from Equine herpesvirus 1 (strain Kentucky A) (EHV-1).